Reading from the N-terminus, the 527-residue chain is Serine/threonine-protein kinase CHK1 (527 aa).

One can recognise a Protein kinase domain in the interval 15-281 (VVLGDTVGQG…LKALKLHPWV (267 aa)). ATP-binding positions include 21–29 (VGQGAFACV) and lysine 45. Residue aspartate 142 is the Proton acceptor of the active site.

Belongs to the protein kinase superfamily. CAMK Ser/Thr protein kinase family. NIM1 subfamily.

The protein localises to the nucleus. The enzyme catalyses L-seryl-[protein] + ATP = O-phospho-L-seryl-[protein] + ADP + H(+). It catalyses the reaction L-threonyl-[protein] + ATP = O-phospho-L-threonyl-[protein] + ADP + H(+). In terms of biological role, serine/threonine-protein kinase which is required for checkpoint-mediated cell cycle arrest and activation of DNA repair in response to the presence of DNA damage or unreplicated DNA. May also negatively regulate cell cycle progression during unperturbed cell cycles. Controls phosphorylation and abundance of PDS1 to prevent anaphase entry. Also helps prevent mitotic exit. This Saccharomyces cerevisiae (strain ATCC 204508 / S288c) (Baker's yeast) protein is Serine/threonine-protein kinase CHK1 (CHK1).